The sequence spans 398 residues: Mu-type opioid receptor (398 aa).

The Extracellular segment spans residues 1–66 (MDSSAGPGNI…CPQTGSPSMV (66 aa)). N-linked (GlcNAc...) asparagine glycosylation is found at Asn-9, Asn-31, Asn-38, and Asn-46. Residues 67–91 (TAITIMALYSIVCVVGLFGNFLVMY) form a helical membrane-spanning segment. At 92–104 (VIVRYTKMKTATN) the chain is on the cytoplasmic side. Residues 105-129 (IYIFNLALADALATSTLPFQSVNYL) form a helical membrane-spanning segment. Residues 130 to 140 (MGTWPFGNILC) are Extracellular-facing. Cys-140 and Cys-217 are disulfide-bonded. Residues 141 to 163 (KIVISIDYYNMFTSIFTLCTMSV) form a helical membrane-spanning segment. Residues 164-183 (DRYIAVCHPVKALDFRTPRN) are Cytoplasmic-facing. Tyr-166 carries the phosphotyrosine modification. A helical membrane pass occupies residues 184-205 (AKIVNVCNWILSSAIGLPVMFM). Residues 206–228 (ATTKYRQGSIDCTLTFSHPTWYW) are Extracellular-facing. A helical membrane pass occupies residues 229 to 253 (ENLLKICVFIFAFIMPVLIITVCYG). Topologically, residues 254–277 (LMILRLKSVRMLSGSKEKDRNLRR) are cytoplasmic. Residues 278 to 304 (ITRMVLVVVAVFIVCWTPIHIYVIIKA) form a helical membrane-spanning segment. Over 305-312 (LITIPETT) the chain is Extracellular. Residues 313-336 (FQTVSWHFCIALGYTNSCLNPVLY) form a helical membrane-spanning segment. An NPxxY; plays a role in stabilizing the activated conformation of the receptor motif is present at residues 332 to 336 (NPVLY). Residues 337–398 (AFLDENFKRC…NLEAETAPLP (62 aa)) lie on the Cytoplasmic side of the membrane. Cys-351 is lipidated: S-palmitoyl cysteine. The tract at residues 362-383 (NSARIRQNTREHPSTANTVDRT) is disordered. A Phosphoserine modification is found at Ser-363. Phosphothreonine is present on Thr-370. Ser-375 is modified (phosphoserine). Phosphothreonine is present on Thr-394.

Belongs to the G-protein coupled receptor 1 family. As to quaternary structure, forms homooligomers and heterooligomers with other GPCRs, such as OPRD1, OPRK1, OPRL1, NPFFR2, ADRA2A, SSTR2, CNR1 and CCR5 (probably in dimeric forms). Interacts with heterotrimeric G proteins; interaction with a heterotrimeric complex containing GNAI1, GNB1 and GNG2 stabilizes the active conformation of the receptor and increases its affinity for endomorphin-2, the synthetic opioid peptide DAMGO and for morphinan agonists. Interacts with PPL; the interaction disrupts agonist-mediated G-protein activation. Interacts (via C-terminus) with DNAJB4 (via C-terminus). Interacts with calmodulin; the interaction inhibits the constitutive activity of OPRM1; it abolishes basal and attenuates agonist-stimulated G-protein coupling. Interacts with FLNA, PLD2, RANBP9 and WLS and GPM6A. Interacts with RTP4. Interacts with SYP and GNAS. Interacts with RGS9, RGS17, RGS20, RGS4, PPP1R9B and HINT1. Isoform 9 interacts with GRPR. Post-translationally, phosphorylated. Differentially phosphorylated in basal and agonist-induced conditions. Agonist-mediated phosphorylation modulates receptor internalization. Phosphorylated by GRK2 in a agonist-dependent manner. Phosphorylation at Tyr-166 requires receptor activation, is dependent on non-receptor protein tyrosine kinase Src and results in a decrease in agonist efficacy by reducing G-protein coupling efficiency. Phosphorylated on tyrosine residues; the phosphorylation is involved in agonist-induced G-protein-independent receptor down-regulation. Phosphorylation at Ser-375 is involved in G-protein-dependent but not beta-arrestin-dependent activation of the ERK pathway. In terms of processing, ubiquitinated. A basal ubiquitination seems not to be related to degradation. Ubiquitination is increased upon formation of OPRM1:OPRD1 oligomers leading to proteasomal degradation; the ubiquitination is diminished by RTP4.

Its subcellular location is the cell membrane. The protein localises to the cell projection. It localises to the axon. It is found in the perikaryon. The protein resides in the dendrite. Its subcellular location is the endosome. Functionally, receptor for endogenous opioids such as beta-endorphin and endomorphin. Receptor for natural and synthetic opioids including morphine, heroin, DAMGO, fentanyl, etorphine, buprenorphin and methadone. Also activated by enkephalin peptides, such as Met-enkephalin or Met-enkephalin-Arg-Phe, with higher affinity for Met-enkephalin-Arg-Phe. Agonist binding to the receptor induces coupling to an inactive GDP-bound heterotrimeric G-protein complex and subsequent exchange of GDP for GTP in the G-protein alpha subunit leading to dissociation of the G-protein complex with the free GTP-bound G-protein alpha and the G-protein beta-gamma dimer activating downstream cellular effectors. The agonist- and cell type-specific activity is predominantly coupled to pertussis toxin-sensitive G(i) and G(o) G alpha proteins, GNAI1, GNAI2, GNAI3 and GNAO1 isoforms Alpha-1 and Alpha-2, and to a lesser extent to pertussis toxin-insensitive G alpha proteins GNAZ and GNA15. They mediate an array of downstream cellular responses, including inhibition of adenylate cyclase activity and both N-type and L-type calcium channels, activation of inward rectifying potassium channels, mitogen-activated protein kinase (MAPK), phospholipase C (PLC), phosphoinositide/protein kinase (PKC), phosphoinositide 3-kinase (PI3K) and regulation of NF-kappa-B. Also couples to adenylate cyclase stimulatory G alpha proteins. The selective temporal coupling to G-proteins and subsequent signaling can be regulated by RGSZ proteins, such as RGS9, RGS17 and RGS4. Phosphorylation by members of the GPRK subfamily of Ser/Thr protein kinases and association with beta-arrestins is involved in short-term receptor desensitization. Beta-arrestins associate with the GPRK-phosphorylated receptor and uncouple it from the G-protein thus terminating signal transduction. The phosphorylated receptor is internalized through endocytosis via clathrin-coated pits which involves beta-arrestins. The activation of the ERK pathway occurs either in a G-protein-dependent or a beta-arrestin-dependent manner and is regulated by agonist-specific receptor phosphorylation. Acts as a class A G-protein coupled receptor (GPCR) which dissociates from beta-arrestin at or near the plasma membrane and undergoes rapid recycling. Receptor down-regulation pathways are varying with the agonist and occur dependent or independent of G-protein coupling. Endogenous ligands induce rapid desensitization, endocytosis and recycling. Heterooligomerization with other GPCRs can modulate agonist binding, signaling and trafficking properties. In terms of biological role, isoform 9 is involved in morphine-induced scratching and seems to cross-activate GRPR in response to morphine. The sequence is that of Mu-type opioid receptor (Oprm1) from Mus musculus (Mouse).